Here is a 99-residue protein sequence, read N- to C-terminus: Monothiol glutaredoxin-S11 (99 aa).

Residues 1 to 99 (MDKVMRMSSE…LVPLVKPYLC (99 aa)) form the Glutaredoxin domain. Position 21 (C21) interacts with [2Fe-2S] cluster.

This sequence belongs to the glutaredoxin family. CC-type subfamily.

The protein localises to the cytoplasm. In terms of biological role, may only reduce GSH-thiol disulfides, but not protein disulfides. This Arabidopsis thaliana (Mouse-ear cress) protein is Monothiol glutaredoxin-S11 (GRXS11).